Consider the following 397-residue polypeptide: Succinate--CoA ligase [ADP-forming] subunit beta (397 aa).

An ATP-grasp domain is found at 9 to 254 (KALLRSYGAP…ETEEDPKELA (246 aa)). ATP-binding positions include K46, 53-55 (GRG), E109, S112, and E117. Residues N209 and D223 each coordinate Mg(2+). Residues N274 and 331–333 (GIM) contribute to the substrate site.

This sequence belongs to the succinate/malate CoA ligase beta subunit family. Heterotetramer of two alpha and two beta subunits. Mg(2+) is required as a cofactor.

It catalyses the reaction succinate + ATP + CoA = succinyl-CoA + ADP + phosphate. It carries out the reaction GTP + succinate + CoA = succinyl-CoA + GDP + phosphate. Its pathway is carbohydrate metabolism; tricarboxylic acid cycle; succinate from succinyl-CoA (ligase route): step 1/1. Its function is as follows. Succinyl-CoA synthetase functions in the citric acid cycle (TCA), coupling the hydrolysis of succinyl-CoA to the synthesis of either ATP or GTP and thus represents the only step of substrate-level phosphorylation in the TCA. The beta subunit provides nucleotide specificity of the enzyme and binds the substrate succinate, while the binding sites for coenzyme A and phosphate are found in the alpha subunit. In Cereibacter sphaeroides (strain ATCC 17029 / ATH 2.4.9) (Rhodobacter sphaeroides), this protein is Succinate--CoA ligase [ADP-forming] subunit beta.